We begin with the raw amino-acid sequence, 564 residues long: Arginine--tRNA ligase (564 aa).

The 'HIGH' region signature appears at 122 to 132; it reads PNIAKPFSIGH.

It belongs to the class-I aminoacyl-tRNA synthetase family. As to quaternary structure, monomer.

It localises to the cytoplasm. The catalysed reaction is tRNA(Arg) + L-arginine + ATP = L-arginyl-tRNA(Arg) + AMP + diphosphate. In Lactococcus lactis subsp. cremoris (strain SK11), this protein is Arginine--tRNA ligase.